Consider the following 769-residue polypeptide: Glutathione biosynthesis bifunctional protein GshAB (769 aa).

The tract at residues 1–347 is glutamate--cysteine ligase; that stretch reads MLDSFKEDPK…QLADENENNI (347 aa). The ATP-grasp domain maps to 514–768; that stretch reads KLVLAEHDIR…IGDKILDFLF (255 aa). 541 to 599 provides a ligand contact to ATP; that stretch reads SLFEDKQIVVKPKSTNYGWGISIFKNKFTLEDYQEALNIAFSYDSSVIIEEFIPGDEFR. Mg(2+)-binding residues include Asp-721, Glu-738, and Asn-740. 3 residues coordinate Mn(2+): Asp-721, Glu-738, and Asn-740.

It in the N-terminal section; belongs to the glutamate--cysteine ligase type 1 family. Type 2 subfamily. Monomer. Requires Mg(2+) as cofactor. It depends on Mn(2+) as a cofactor.

It carries out the reaction L-cysteine + L-glutamate + ATP = gamma-L-glutamyl-L-cysteine + ADP + phosphate + H(+). The enzyme catalyses gamma-L-glutamyl-L-cysteine + glycine + ATP = glutathione + ADP + phosphate + H(+). It functions in the pathway sulfur metabolism; glutathione biosynthesis; glutathione from L-cysteine and L-glutamate: step 1/2. It participates in sulfur metabolism; glutathione biosynthesis; glutathione from L-cysteine and L-glutamate: step 2/2. Synthesizes glutathione from L-glutamate and L-cysteine via gamma-L-glutamyl-L-cysteine. This is Glutathione biosynthesis bifunctional protein GshAB from Listeria monocytogenes serotype 4b (strain F2365).